We begin with the raw amino-acid sequence, 395 residues long: Transcriptional coactivator yorkie (395 aa).

The interval 73–100 is disordered; it reads NSFFTPPAPSHSRANSADSTYDAGSQSS. Phosphoserine occurs at positions 82, 88, 100, 117, and 145. The segment covering 84–100 has biased composition (polar residues); that stretch reads SRANSADSTYDAGSQSS. Disordered regions lie at residues 129–150 and 162–199; these read PSPQHSRLAIHHSRARSSPASL and AAAANNPNANPSSQQQPAGPTFPENSAQEFPSGAPASS. Position 146 is a phosphoserine; by CDK7 (S146). S149 carries the phosphoserine modification. A compositionally biased stretch (low complexity) spans 162 to 179; the sequence is AAAANNPNANPSSQQQPA. The residue at position 227 (S227) is a Phosphoserine. Y228 is modified (phosphotyrosine). Phosphoserine is present on S232. 2 consecutive WW domains span residues 241-274 and 310-343; these read GALPPGWEQAKTNDGQIYYLNHTTKSTQWEDPRI and GPLPDGWEQAVTESGDLYFINHIDRTTSWNDPRM.

This sequence belongs to the YAP1 family. Interacts (via WW domains) with wts. Interacts (via N-terminus) with sd (via C-terminus) and this interaction enhances the transcriptional activity of sd. The phosphorylated form interacts with 14-3-3epsilon and 14-3-3zeta. Interacts with Ack and ex. Its activity is regulated by multiple phosphorylation events. Phosphorylation at Ser-88, Ser-145 and Ser-227 negatively regulate its activity and restrict its nuclear localization. Wts-mediated phosphorylation at Ser-145 promotes interaction with 14-3-3epsilon and 14-3-3zeta. Phosphorylation at Ser-88 and Ser-227 regulate nuclear localization and activity independent of 14-3-3 association. Phosphorylation at Ser-146 by Cdk7 promotes its stability by preventing ubiquitination by the DCX(DCAF12) complex. Post-translationally, ubiquitinated by the DCX(DCAF12) complex, leading to its degradation. Phosphorylation at Ser-146 by Cdk7 prevents ubiquitination by the DCX(DCAF12) complex.

The protein resides in the cytoplasm. The protein localises to the nucleus. Its function is as follows. Transcriptional coactivator which is the critical downstream regulatory target in the Hippo/SWH (Sav/Wts/Hpo) signaling pathway that plays a pivotal role in organ size control and tumor suppression by restricting proliferation and promoting apoptosis. The core of this pathway is composed of a kinase cascade wherein Hippo (Hpo), in complex with its regulatory protein Salvador (Sav), phosphorylates and activates Warts (Wts) in complex with its regulatory protein Mats, which in turn phosphorylates and inactivates the Yorkie (Yki) oncoprotein. The Hippo/SWH signaling pathway inhibits the activity of the transcriptional complex formed by Scalloped (sd) and Yki and the target genes of this pathway include cyclin-E (cycE), diap1 and bantam. Regulates the expression of G1/S-specific CycE and diap1, thereby promoting cell proliferation and inhibiting apoptosis. Required for transcriptional activity of sd in wing imaginal disks. Induces expression of expression of vestigial (vg) in wing and haltere disks and the expression of transcription factor E2f (E2f). The protein is Transcriptional coactivator yorkie (yki) of Drosophila melanogaster (Fruit fly).